Here is a 511-residue protein sequence, read N- to C-terminus: Maturase K (511 aa).

The protein belongs to the intron maturase 2 family. MatK subfamily.

It is found in the plastid. Its subcellular location is the chloroplast. In terms of biological role, usually encoded in the trnK tRNA gene intron. Probably assists in splicing its own and other chloroplast group II introns. This Chloranthus spicatus (Chulantree) protein is Maturase K.